The chain runs to 61 residues: Small ribosomal subunit protein uS14B (61 aa).

Residues cysteine 24, cysteine 27, cysteine 40, and cysteine 43 each coordinate Zn(2+).

The protein belongs to the universal ribosomal protein uS14 family. Zinc-binding uS14 subfamily. In terms of assembly, part of the 30S ribosomal subunit. Contacts proteins S3 and S10. The cofactor is Zn(2+).

Functionally, binds 16S rRNA, required for the assembly of 30S particles and may also be responsible for determining the conformation of the 16S rRNA at the A site. The polypeptide is Small ribosomal subunit protein uS14B (Ligilactobacillus salivarius (strain UCC118) (Lactobacillus salivarius)).